A 174-amino-acid chain; its full sequence is Calcium-binding protein F (174 aa).

EF-hand domains lie at 9–44 (KIFQEVQKFVKNYDLNKDGSVTSFDIYRSFLKKMDG), 60–83 (VDMDHDGKFTYQEIAKYCADEAKK), 92–127 (AALADVEAMLLRFDKDKDKKLTKTEFVEYFKGNGHT), and 133–162 (DQVLKIIDLDKDGCVSANELQEWFKKRRID). Positions 22, 24, 26, 28, and 33 each coordinate Ca(2+). Positions 105, 107, 109, 111, 116, 140, 142, 144, 146, and 151 each coordinate Ca(2+).

This Dictyostelium discoideum (Social amoeba) protein is Calcium-binding protein F (cbpF).